A 469-amino-acid chain; its full sequence is Cell division protein FtsP (469 aa).

Positions 1-27 (MKLSRRQFLQRSTLAGVATVTPTSLWA) form a signal peptide, tat-type signal.

The protein belongs to the FtsP family. Post-translationally, predicted to be exported by the Tat system. The position of the signal peptide cleavage has not been experimentally proven.

It is found in the periplasm. Functionally, cell division protein that is required for growth during stress conditions. May be involved in protecting or stabilizing the divisomal assembly under conditions of stress. The chain is Cell division protein FtsP from Glaesserella parasuis serovar 5 (strain SH0165) (Haemophilus parasuis).